The following is a 60-amino-acid chain: Large ribosomal subunit protein bL32 (60 aa).

Residues 1 to 60 form a disordered region; the sequence is MAVQQNKKSPSKRGMHRSHNALTVPGIAVESTTGETHLRHHISPTGFYRGRKVLKTKSEA. Composition is skewed to basic residues over residues 9–19 and 49–60; these read SPSKRGMHRSH and RGRKVLKTKSEA.

It belongs to the bacterial ribosomal protein bL32 family.

This chain is Large ribosomal subunit protein bL32, found in Polaromonas sp. (strain JS666 / ATCC BAA-500).